The chain runs to 285 residues: Tropomyosin-2 (285 aa).

Residues Met1–Ala277 adopt a coiled-coil conformation. The disordered stretch occupies residues Glu103 to Arg133. Positions Glu122–Arg133 are enriched in basic and acidic residues.

Belongs to the tropomyosin family. Homodimer.

Its function is as follows. Tropomyosin, in association with the troponin complex, plays a central role in the calcium dependent regulation of muscle contraction. This Bombyx mori (Silk moth) protein is Tropomyosin-2.